Here is a 361-residue protein sequence, read N- to C-terminus: Phospho-N-acetylmuramoyl-pentapeptide-transferase (361 aa).

10 helical membrane-spanning segments follow: residues 28 to 48, 73 to 93, 98 to 118, 132 to 152, 168 to 188, 199 to 219, 235 to 255, 263 to 283, 288 to 308, and 338 to 358; these read LAILTSFFFTFIIAPPCIRWL, TMGGIIITASVLVAVLMWGNL, MWIMIISFLGFGLIGFIDDYL, YKLFAQLLLASSVTLFLYFNP, WLIDLGIFYLPFAIFVIVGSS, GLAAGLVGIASIVNAVLLYIS, GTGELAVFCGAMLGACLGFLW, VFMGDVGSLSLGGALGSLAVI, IVLALVGGIFVVEALSVILQV, and KVIVRFWIIGIILALLSLLTL.

This sequence belongs to the glycosyltransferase 4 family. MraY subfamily. Requires Mg(2+) as cofactor.

It localises to the cell inner membrane. The catalysed reaction is UDP-N-acetyl-alpha-D-muramoyl-L-alanyl-gamma-D-glutamyl-meso-2,6-diaminopimeloyl-D-alanyl-D-alanine + di-trans,octa-cis-undecaprenyl phosphate = di-trans,octa-cis-undecaprenyl diphospho-N-acetyl-alpha-D-muramoyl-L-alanyl-D-glutamyl-meso-2,6-diaminopimeloyl-D-alanyl-D-alanine + UMP. Its pathway is cell wall biogenesis; peptidoglycan biosynthesis. Its function is as follows. Catalyzes the initial step of the lipid cycle reactions in the biosynthesis of the cell wall peptidoglycan: transfers peptidoglycan precursor phospho-MurNAc-pentapeptide from UDP-MurNAc-pentapeptide onto the lipid carrier undecaprenyl phosphate, yielding undecaprenyl-pyrophosphoryl-MurNAc-pentapeptide, known as lipid I. In Thermodesulfovibrio yellowstonii (strain ATCC 51303 / DSM 11347 / YP87), this protein is Phospho-N-acetylmuramoyl-pentapeptide-transferase.